The primary structure comprises 182 residues: Ribulose bisphosphate carboxylase small subunit, chloroplastic (182 aa).

The N-terminal 58 residues, 1-58, are a transit peptide targeting the chloroplast; that stretch reads MASSMISSATIATVNCSSPAQANMVAPFTGLKSASAFPVTRKANNDITSLASNGGRVQ.

The protein belongs to the RuBisCO small chain family. In terms of assembly, heterohexadecamer of 8 large and 8 small subunits.

The protein localises to the plastid. It localises to the chloroplast. Functionally, ruBisCO catalyzes two reactions: the carboxylation of D-ribulose 1,5-bisphosphate, the primary event in carbon dioxide fixation, as well as the oxidative fragmentation of the pentose substrate. Both reactions occur simultaneously and in competition at the same active site. Although the small subunit is not catalytic it is essential for maximal activity. This is Ribulose bisphosphate carboxylase small subunit, chloroplastic from Gossypium hirsutum (Upland cotton).